The sequence spans 494 residues: Protein DETOXIFICATION 22 (494 aa).

Helical transmembrane passes span 40-60, 78-98, 123-143, 159-179, 188-208, 217-237, 268-288, 299-319, 340-360, 384-404, 416-436, and 441-461; these read LWVVAAPSIFTKFSTYGVSLV, ITFTVLLRFSNGILLGMASAL, IVLTGCTICIMPIFIFSGPIL, IALWLIAINFTFVPAFTCQIF, IIAYVSAVTLGLHVFFSWLLV, GAMTSTLVAFWMPNIVQLLYV, GGMVCLELWYNSILVLLTGNL, AICINVNALQMMIALGFLAAV, IVAVFTSLSIGLVLFFVFLFL, LLAFSILLNSVQPVLSGVAVG, LACYYLLGIPVGLVLGYVVGL, and VWIGMLFGIFVQTCVLTIMTL.

The protein belongs to the multi antimicrobial extrusion (MATE) (TC 2.A.66.1) family.

It localises to the membrane. The sequence is that of Protein DETOXIFICATION 22 from Arabidopsis thaliana (Mouse-ear cress).